Here is a 265-residue protein sequence, read N- to C-terminus: MATEEPIVAVETVPEPIVTEPTTITEPEVPEKEEPKAEVEKTKKAKGSKPKKASKPRNPASHPTYEEMIKDAIVSLKEKNGSSQYAIAKFIEEKQKQLPANFKKLLLQNLKKNVASGKLIKVKGSFKLSAAAKKPAVAKPKAKTAAKAKSVKAKPAAKPKAKAVVKPKVASKAKAVAAKPKKAAAKPKTVAAKTKPTAAKPKAVVKPKSKVKPAKVAKTSVKTTPGKKVAAVKKVAAKKVPVKSVKAKSVKSPVKKVSVKRGGRK.

Positions 1 to 27 (MATEEPIVAVETVPEPIVTEPTTITEP) are enriched in low complexity. 3 disordered regions span residues 1–66 (MATE…PTYE), 131–226 (AAKK…TTPG), and 242–265 (VKSVKAKSVKSPVKKVSVKRGGRK). Residues 29–42 (VPEKEEPKAEVEKT) are compositionally biased toward basic and acidic residues. A compositionally biased stretch (basic residues) spans 43–55 (KKAKGSKPKKASK). The H15 domain maps to 61-130 (SHPTYEEMIK…KVKGSFKLSA (70 aa)). A compositionally biased stretch (basic residues) spans 140–171 (PKAKTAAKAKSVKAKPAAKPKAKAVVKPKVAS). Positions 186-202 (KPKTVAAKTKPTAAKPK) are enriched in low complexity. Over residues 203–215 (AVVKPKSKVKPAK) the composition is skewed to basic residues. Residues 216–226 (VAKTSVKTTPG) show a composition bias toward low complexity.

Belongs to the histone H1/H5 family.

It localises to the nucleus. The protein localises to the chromosome. Histones H1 are necessary for the condensation of nucleosome chains into higher-order structures. In Pisum sativum (Garden pea), this protein is Histone H1.